The sequence spans 257 residues: NAD-capped RNA hydrolase NudC (257 aa).

Substrate-binding residues include lysine 25 and arginine 69. 2 residues coordinate Zn(2+): cysteine 98 and cysteine 101. Glutamate 111 serves as a coordination point for substrate. Residues cysteine 116 and cysteine 119 each contribute to the Zn(2+) site. Tyrosine 124 is a binding site for substrate. Positions 125 to 248 (PQIAPCIIVA…TVARRLIEDT (124 aa)) constitute a Nudix hydrolase domain. Residues alanine 158, glutamate 174, and glutamate 178 each coordinate a divalent metal cation. The Nudix box signature appears at 159-180 (GFVEVGETLEQAVAREVMEESG). 192-199 (QPWPFPQS) contacts substrate. Glutamate 219 serves as a coordination point for a divalent metal cation. Alanine 241 contacts substrate.

This sequence belongs to the Nudix hydrolase family. NudC subfamily. Homodimer. It depends on Mg(2+) as a cofactor. Mn(2+) serves as cofactor. Zn(2+) is required as a cofactor.

It carries out the reaction a 5'-end NAD(+)-phospho-ribonucleoside in mRNA + H2O = a 5'-end phospho-adenosine-phospho-ribonucleoside in mRNA + beta-nicotinamide D-ribonucleotide + 2 H(+). The enzyme catalyses NAD(+) + H2O = beta-nicotinamide D-ribonucleotide + AMP + 2 H(+). It catalyses the reaction NADH + H2O = reduced beta-nicotinamide D-ribonucleotide + AMP + 2 H(+). Functionally, mRNA decapping enzyme that specifically removes the nicotinamide adenine dinucleotide (NAD) cap from a subset of mRNAs by hydrolyzing the diphosphate linkage to produce nicotinamide mononucleotide (NMN) and 5' monophosphate mRNA. The NAD-cap is present at the 5'-end of some mRNAs and stabilizes RNA against 5'-processing. Has preference for mRNAs with a 5'-end purine. Catalyzes the hydrolysis of a broad range of dinucleotide pyrophosphates. The chain is NAD-capped RNA hydrolase NudC from Escherichia coli O127:H6 (strain E2348/69 / EPEC).